A 394-amino-acid polypeptide reads, in one-letter code: Dual-specificity RNA methyltransferase RlmN (394 aa).

The active-site Proton acceptor is Glu-116. The Radical SAM core domain occupies 122 to 365; it reads EEDRGTLCVS…SPIRTPRGED (244 aa). Cys-129 and Cys-370 are disulfide-bonded. Cys-136, Cys-140, and Cys-143 together coordinate [4Fe-4S] cluster. S-adenosyl-L-methionine is bound by residues 196 to 197, Ser-228, 250 to 252, and Asn-327; these read GE and SFH. Cys-370 acts as the S-methylcysteine intermediate in catalysis.

The protein belongs to the radical SAM superfamily. RlmN family. Requires [4Fe-4S] cluster as cofactor.

It is found in the cytoplasm. The catalysed reaction is adenosine(2503) in 23S rRNA + 2 reduced [2Fe-2S]-[ferredoxin] + 2 S-adenosyl-L-methionine = 2-methyladenosine(2503) in 23S rRNA + 5'-deoxyadenosine + L-methionine + 2 oxidized [2Fe-2S]-[ferredoxin] + S-adenosyl-L-homocysteine. It carries out the reaction adenosine(37) in tRNA + 2 reduced [2Fe-2S]-[ferredoxin] + 2 S-adenosyl-L-methionine = 2-methyladenosine(37) in tRNA + 5'-deoxyadenosine + L-methionine + 2 oxidized [2Fe-2S]-[ferredoxin] + S-adenosyl-L-homocysteine. Its function is as follows. Specifically methylates position 2 of adenine 2503 in 23S rRNA and position 2 of adenine 37 in tRNAs. m2A2503 modification seems to play a crucial role in the proofreading step occurring at the peptidyl transferase center and thus would serve to optimize ribosomal fidelity. The chain is Dual-specificity RNA methyltransferase RlmN from Dinoroseobacter shibae (strain DSM 16493 / NCIMB 14021 / DFL 12).